We begin with the raw amino-acid sequence, 309 residues long: Ribosomal RNA small subunit methyltransferase H (309 aa).

S-adenosyl-L-methionine is bound by residues 36-38, D56, F82, D103, and Q110; that span reads GGH.

Belongs to the methyltransferase superfamily. RsmH family.

It localises to the cytoplasm. The catalysed reaction is cytidine(1402) in 16S rRNA + S-adenosyl-L-methionine = N(4)-methylcytidine(1402) in 16S rRNA + S-adenosyl-L-homocysteine + H(+). Functionally, specifically methylates the N4 position of cytidine in position 1402 (C1402) of 16S rRNA. The polypeptide is Ribosomal RNA small subunit methyltransferase H (Hahella chejuensis (strain KCTC 2396)).